Here is a 258-residue protein sequence, read N- to C-terminus: 6-carboxyhexanoate--CoA ligase (258 aa).

It belongs to the BioW family. As to quaternary structure, homodimer. Mg(2+) is required as a cofactor.

The enzyme catalyses heptanedioate + ATP + CoA = 6-carboxyhexanoyl-CoA + AMP + diphosphate. It participates in metabolic intermediate metabolism; pimeloyl-CoA biosynthesis; pimeloyl-CoA from pimelate: step 1/1. Catalyzes the transformation of pimelate into pimeloyl-CoA with concomitant hydrolysis of ATP to AMP. In Bacillus spizizenii (strain ATCC 23059 / NRRL B-14472 / W23) (Bacillus subtilis subsp. spizizenii), this protein is 6-carboxyhexanoate--CoA ligase.